The following is a 372-amino-acid chain: sn-glycerol-3-phosphate import ATP-binding protein UgpC (372 aa).

In terms of domain architecture, ABC transporter spans 2–233 (LDIKQLVKTY…PASTFVASFI (232 aa)). 35–42 (GPSGCGKS) contributes to the ATP binding site.

It belongs to the ABC transporter superfamily. sn-glycerol-3-phosphate importer (TC 3.A.1.1.3) family. In terms of assembly, the complex is composed of two ATP-binding proteins (UgpC), two transmembrane proteins (UgpA and UgpE) and a solute-binding protein (UgpB).

It localises to the cell inner membrane. The enzyme catalyses sn-glycerol 3-phosphate(out) + ATP + H2O = sn-glycerol 3-phosphate(in) + ADP + phosphate + H(+). In terms of biological role, part of the ABC transporter complex UgpBAEC involved in sn-glycerol-3-phosphate (G3P) import. Responsible for energy coupling to the transport system. The sequence is that of sn-glycerol-3-phosphate import ATP-binding protein UgpC from Vibrio cholerae serotype O1 (strain ATCC 39315 / El Tor Inaba N16961).